The primary structure comprises 179 residues: 3-hydroxyanthranilate 3,4-dioxygenase (179 aa).

Arg-47 contributes to the O2 binding site. The Fe cation site is built by His-51, Glu-57, and His-96. Glu-57 is a substrate binding site. The substrate site is built by Arg-100 and Glu-110. Residues Cys-125, Cys-128, Cys-162, and Cys-165 each contribute to the Fe cation site.

This sequence belongs to the 3-HAO family. The cofactor is Fe(2+).

The enzyme catalyses 3-hydroxyanthranilate + O2 = (2Z,4Z)-2-amino-3-carboxymuconate 6-semialdehyde. Its pathway is cofactor biosynthesis; NAD(+) biosynthesis; quinolinate from L-kynurenine: step 3/3. Catalyzes the oxidative ring opening of 3-hydroxyanthranilate to 2-amino-3-carboxymuconate semialdehyde, which spontaneously cyclizes to quinolinate. The sequence is that of 3-hydroxyanthranilate 3,4-dioxygenase from Bacillus cereus (strain 03BB102).